A 375-amino-acid chain; its full sequence is ELAV-like protein 2 (375 aa).

RRM domains follow at residues 67–145 (TNLI…YARP), 153–233 (ANLY…FANN), and 292–370 (WCIF…FKTS).

This sequence belongs to the RRM elav family. In terms of assembly, part of a ribonucleoprotein (RNP) complex, at least composed of elavl1/elrA and/or elavl2/elrB, igf2bp3/vg1RBP, ddx6/Xp54, ybx2/frgy2, lsm14b/rap55b and, in a subset of RNP complexes, stau1/staufen. Binds RNA as a homooligomer.

It is found in the cytoplasm. The protein localises to the cell cortex. Binds to poly-U elements and AU-rich elements (AREs) in the 3'-UTR of target mRNAs. Required for the vegetal localization of vg1 mRNA. Probably required for nervous system development. This Xenopus tropicalis (Western clawed frog) protein is ELAV-like protein 2.